A 405-amino-acid polypeptide reads, in one-letter code: Prostaglandin E2 receptor EP1 subtype (405 aa).

Topologically, residues 1 to 39 (MSPYGLNLSLVDEATTCVTPRVPNTSVVLPTGGNGTSPA) are extracellular. N-linked (GlcNAc...) asparagine glycosylation is found at asparagine 7, asparagine 24, and asparagine 34. A helical membrane pass occupies residues 40–62 (LPIFSMTLGAVSNVLALALLAQV). At 63–80 (AGRLRRRRSTATFLLFVA) the chain is on the cytoplasmic side. Residues 81 to 99 (SLLAIDLAGHVIPGALVLR) traverse the membrane as a helical segment. At 100 to 113 (LYTAGRAPAGGACH) the chain is on the extracellular side. Cysteine 112 and cysteine 190 are joined by a disulfide. Residues 114 to 135 (FLGGCMVFFGLCPLLLGCGMAV) traverse the membrane as a helical segment. The Cytoplasmic segment spans residues 136-157 (ERCVGVTQPLIHAARVSVARAR). A helical membrane pass occupies residues 158-179 (LALALLAAMALAVALLPLVHVG). Over 180–202 (HYELQYPGTWCFISLGPPGGWRQ) the chain is Extracellular. The chain crosses the membrane as a helical span at residues 203 to 228 (ALLAGLFAGLGLAALLAALVCNTLSG). Residues 229-301 (LALLRARWRR…HAHDVEMVGQ (73 aa)) lie on the Cytoplasmic side of the membrane. Residues 302 to 323 (LVGIMVVSCICWSPLLVLVVLA) traverse the membrane as a helical segment. At 324 to 337 (IGGWNSNSLQRPLF) the chain is on the extracellular side. A helical membrane pass occupies residues 338-357 (LAVRLASWNQILDPWVYILL). Topologically, residues 358–405 (RQAMLRQLLRLLPLRVSAKGGPTELSLTKSAWEASSLRSSRHSGFSHL) are cytoplasmic.

The protein belongs to the G-protein coupled receptor 1 family. Phosphorylated. Highly abundant in kidney and lung. Found in a lesser extent in spleen, colon, and thymus. Also expressed in uterine myometrium and endometrium.

It localises to the cell membrane. In terms of biological role, receptor for prostaglandin E2 (PGE2). The activity of this receptor is mediated by G(q) proteins which activate a phosphatidylinositol-calcium second messenger system. May play a role as an important modulator of renal function. Implicated the smooth muscle contractile response to PGE2 in various tissues. Isoform 1 and isoform 2 have identical ligand binding properties, but isoform 2 lacks coupling to calcium mobilization and may therefore attenuate the action of PGE2 on tissues. The chain is Prostaglandin E2 receptor EP1 subtype (Ptger1) from Rattus norvegicus (Rat).